The following is an 893-amino-acid chain: Major vault protein (893 aa).

An N-acetylalanine modification is found at Ala-2. MVP repeat units lie at residues 2-56 (ATEE…VPPR), 57-111 (HYCT…DITP), 112-164 (LQVV…EIIQ), 165-217 (ATII…DLVD), 218-272 (AVIL…GVVP), 273-323 (ITTL…IQDV), 324-379 (YVLS…ERQA), 380-457 (IPLD…KTRV), and 458-520 (VSYR…LLGP). Lys-444 participates in a covalent cross-link: Glycyl lysine isopeptide (Lys-Gly) (interchain with G-Cter in SUMO2). Position 445 is a phosphoserine (Ser-445). Lys-704 is covalently cross-linked (Glycyl lysine isopeptide (Lys-Gly) (interchain with G-Cter in SUMO2)). The tract at residues 856 to 893 (QPLGRRVASGPSPGEGISPQSAQAPQAPGDNHVVPVLR) is disordered.

As to quaternary structure, the vault ribonucleoprotein particle is a huge (400 A x 670 A) cage structure of 12.9 MDa. It consists of a dimer of half-vaults, with each half-vault comprising 39 identical major vault protein (MVP) chains, PARP4 and one or more vault RNAs (vRNAs). Interacts with TEP1. Interacts with PTEN and activated MAPK1. The phosphorylated protein interacts with the SH2 domains of PTPN11 and SRC. Interacts with APEX1. May interact with ZNF540. In terms of processing, phosphorylated on Tyr residues after EGF stimulation. Dephosphorylated by PTPN11.

Its subcellular location is the cytoplasm. It localises to the nucleus. Required for normal vault structure. Vaults are multi-subunit structures that may act as scaffolds for proteins involved in signal transduction. Vaults may also play a role in nucleo-cytoplasmic transport. Down-regulates IFNG-mediated STAT1 signaling and subsequent activation of JAK. Down-regulates SRC activity and signaling through MAP kinases. This is Major vault protein (MVP) from Pongo abelii (Sumatran orangutan).